The following is a 305-amino-acid chain: Ribonucleoside-diphosphate reductase small subunit (305 aa).

Fe cation is bound by residues glutamate 64, glutamate 94, and histidine 97. Tyrosine 101 is an active-site residue. The helical transmembrane segment at 150–170 (VLVFLLIEGIFFISSFYSIAT) threads the bilayer. Fe cation-binding residues include glutamate 157, glutamate 191, and histidine 194.

The protein belongs to the ribonucleoside diphosphate reductase small chain family. Heterotetramer composed of a homodimer of the large subunit (R1) and a homodimer of the small subunit (R2). Larger multisubunit protein complex are also active, composed of (R1)n(R2)n. Fe cation serves as cofactor.

The protein resides in the host membrane. It carries out the reaction a 2'-deoxyribonucleoside 5'-diphosphate + [thioredoxin]-disulfide + H2O = a ribonucleoside 5'-diphosphate + [thioredoxin]-dithiol. Functionally, ribonucleoside-diphosphate reductase holoenzyme provides the precursors necessary for viral DNA synthesis. Allows virus growth in non-dividing cells, as well as reactivation from latency in infected hosts. Catalyzes the biosynthesis of deoxyribonucleotides from the corresponding ribonucleotides. This is Ribonucleoside-diphosphate reductase small subunit from Equus caballus (Horse).